Consider the following 250-residue polypeptide: UDP-2,3-diacylglucosamine hydrolase (250 aa).

Mn(2+) is bound by residues Asp8, His10, Asp41, Asn79, and His114. Position 79 to 80 (79 to 80 (NR)) interacts with substrate. Substrate is bound by residues Asp122, Ser160, Asp172, Gln175, and His203. Residues His203 and His205 each contribute to the Mn(2+) site.

The protein belongs to the LpxH family. Mn(2+) is required as a cofactor.

Its subcellular location is the cell inner membrane. It carries out the reaction UDP-2-N,3-O-bis[(3R)-3-hydroxytetradecanoyl]-alpha-D-glucosamine + H2O = 2-N,3-O-bis[(3R)-3-hydroxytetradecanoyl]-alpha-D-glucosaminyl 1-phosphate + UMP + 2 H(+). It participates in glycolipid biosynthesis; lipid IV(A) biosynthesis; lipid IV(A) from (3R)-3-hydroxytetradecanoyl-[acyl-carrier-protein] and UDP-N-acetyl-alpha-D-glucosamine: step 4/6. Its function is as follows. Hydrolyzes the pyrophosphate bond of UDP-2,3-diacylglucosamine to yield 2,3-diacylglucosamine 1-phosphate (lipid X) and UMP by catalyzing the attack of water at the alpha-P atom. Involved in the biosynthesis of lipid A, a phosphorylated glycolipid that anchors the lipopolysaccharide to the outer membrane of the cell. This Xylella fastidiosa (strain M23) protein is UDP-2,3-diacylglucosamine hydrolase.